A 68-amino-acid polypeptide reads, in one-letter code: MQIIVRDNNVDQALRALKKKLQREGVYREMKLRRHYEKPSEKRARERAAAVRRARKMERKRMERDGIK.

A disordered region spans residues 35-68 (HYEKPSEKRARERAAAVRRARKMERKRMERDGIK). The span at 37 to 49 (EKPSEKRARERAA) shows a compositional bias: basic and acidic residues. Residues 50–59 (AVRRARKMER) show a composition bias toward basic residues.

Belongs to the bacterial ribosomal protein bS21 family.

This Sphingopyxis alaskensis (strain DSM 13593 / LMG 18877 / RB2256) (Sphingomonas alaskensis) protein is Small ribosomal subunit protein bS21.